Reading from the N-terminus, the 305-residue chain is Sulfate adenylyltransferase subunit 2 (305 aa).

The protein belongs to the PAPS reductase family. CysD subfamily. In terms of assembly, heterodimer composed of CysD, the smaller subunit, and CysN.

The enzyme catalyses sulfate + ATP + H(+) = adenosine 5'-phosphosulfate + diphosphate. It participates in sulfur metabolism; hydrogen sulfide biosynthesis; sulfite from sulfate: step 1/3. Its function is as follows. With CysN forms the ATP sulfurylase (ATPS) that catalyzes the adenylation of sulfate producing adenosine 5'-phosphosulfate (APS) and diphosphate, the first enzymatic step in sulfur assimilation pathway. APS synthesis involves the formation of a high-energy phosphoric-sulfuric acid anhydride bond driven by GTP hydrolysis by CysN coupled to ATP hydrolysis by CysD. In Myxococcus xanthus (strain DK1622), this protein is Sulfate adenylyltransferase subunit 2.